The primary structure comprises 145 residues: Putative pre-16S rRNA nuclease (145 aa).

The protein belongs to the YqgF nuclease family.

The protein resides in the cytoplasm. In terms of biological role, could be a nuclease involved in processing of the 5'-end of pre-16S rRNA. The sequence is that of Putative pre-16S rRNA nuclease from Pseudomonas fluorescens (strain ATCC BAA-477 / NRRL B-23932 / Pf-5).